A 257-amino-acid polypeptide reads, in one-letter code: RNA polymerase sigma-G factor (257 aa).

Positions 66-79 match the Polymerase core binding motif; that stretch reads DLFQVGCIGLIKSI. The segment at residues 228 to 247 is a DNA-binding region (H-T-H motif); the sequence is QMEVADEIGISQAQVSRLEK.

It belongs to the sigma-70 factor family.

Its function is as follows. Sigma factors are initiation factors that promote the attachment of RNA polymerase to specific initiation sites and are then released. This sigma factor is responsible for the expression of sporulation specific genes. In Clostridium acetobutylicum (strain ATCC 824 / DSM 792 / JCM 1419 / IAM 19013 / LMG 5710 / NBRC 13948 / NRRL B-527 / VKM B-1787 / 2291 / W), this protein is RNA polymerase sigma-G factor (sigG).